The following is a 339-amino-acid chain: Ribonucleoside-diphosphate reductase subunit beta (339 aa).

Fe cation-binding residues include aspartate 87 and histidine 121. Tyrosine 125 is an active-site residue. Histidine 215 provides a ligand contact to Fe cation.

The protein belongs to the ribonucleoside diphosphate reductase small chain family. Tetramer of two alpha and two beta subunits. Requires Fe cation as cofactor.

The enzyme catalyses a 2'-deoxyribonucleoside 5'-diphosphate + [thioredoxin]-disulfide + H2O = a ribonucleoside 5'-diphosphate + [thioredoxin]-dithiol. Provides the precursors necessary for DNA synthesis. Catalyzes the biosynthesis of deoxyribonucleotides from the corresponding ribonucleotides. The polypeptide is Ribonucleoside-diphosphate reductase subunit beta (nrdF) (Mycoplasmoides gallisepticum (strain R(low / passage 15 / clone 2)) (Mycoplasma gallisepticum)).